The primary structure comprises 182 residues: Adenine phosphoribosyltransferase (182 aa).

It belongs to the purine/pyrimidine phosphoribosyltransferase family. As to quaternary structure, homodimer.

It is found in the cytoplasm. The catalysed reaction is AMP + diphosphate = 5-phospho-alpha-D-ribose 1-diphosphate + adenine. It functions in the pathway purine metabolism; AMP biosynthesis via salvage pathway; AMP from adenine: step 1/1. Catalyzes a salvage reaction resulting in the formation of AMP, that is energically less costly than de novo synthesis. In Bordetella avium (strain 197N), this protein is Adenine phosphoribosyltransferase.